Reading from the N-terminus, the 597-residue chain is Aspartate--tRNA ligase (597 aa).

Glutamate 180 contributes to the L-aspartate binding site. The interval 204–207 (QLFK) is aspartate. L-aspartate is bound at residue arginine 226. ATP contacts are provided by residues 226 to 228 (RDE) and glutamine 235. Histidine 454 provides a ligand contact to L-aspartate. Position 488 (glutamate 488) interacts with ATP. Position 495 (arginine 495) interacts with L-aspartate. Residue 540–543 (GLDR) coordinates ATP.

This sequence belongs to the class-II aminoacyl-tRNA synthetase family. Type 1 subfamily. In terms of assembly, homodimer.

The protein resides in the cytoplasm. The enzyme catalyses tRNA(Asp) + L-aspartate + ATP = L-aspartyl-tRNA(Asp) + AMP + diphosphate. In terms of biological role, catalyzes the attachment of L-aspartate to tRNA(Asp) in a two-step reaction: L-aspartate is first activated by ATP to form Asp-AMP and then transferred to the acceptor end of tRNA(Asp). This is Aspartate--tRNA ligase from Clostridium perfringens (strain ATCC 13124 / DSM 756 / JCM 1290 / NCIMB 6125 / NCTC 8237 / Type A).